Consider the following 376-residue polypeptide: Alpha-2,8-sialyltransferase 8E (376 aa).

Residues 1–17 (MRYADPSANRDLLGSRT) are Cytoplasmic-facing. A helical; Signal-anchor for type II membrane protein membrane pass occupies residues 18-38 (LLFIFICAFALVTLLQQILYG). Over 39-376 (RNYIKRYFEF…RVHTGTCSCC (338 aa)) the chain is Lumenal. 2 N-linked (GlcNAc...) asparagine glycosylation sites follow: Asn-56 and Asn-96. 2 disulfide bridges follow: Cys-164/Cys-313 and Cys-178/Cys-373. Residues Asn-192 and 214 to 216 (NPS) each bind substrate. N-linked (GlcNAc...) asparagine glycans are attached at residues Asn-241 and Asn-284. 300 to 302 (STG) contacts substrate. The active-site Proton donor/acceptor is His-348.

The protein belongs to the glycosyltransferase 29 family. In terms of tissue distribution, expressed in fetal and adult brain, adult heart and skeletal muscle. As to expression, expressed in fetal and adult brain, not detected in adult heart and skeletal muscle.

Its subcellular location is the golgi apparatus membrane. The catalysed reaction is a ganglioside GT1b (d18:1(4E)) + CMP-N-acetyl-beta-neuraminate = a ganglioside GQ1b (d18:1(4E)) + CMP + H(+). The enzyme catalyses a ganglioside GD3 (d18:1(4E)) + CMP-N-acetyl-beta-neuraminate = a ganglioside GT3 (d18:1(4E)) + CMP + H(+). It carries out the reaction a ganglioside GD1a (d18:1(4E)) + CMP-N-acetyl-beta-neuraminate = a ganglioside GT1a (d18:1(4E)) + CMP + H(+). It catalyses the reaction a ganglioside GM1b (d18:1(4E)) + CMP-N-acetyl-beta-neuraminate = a ganglioside GD1c (d18:1(4E)) + CMP + H(+). The catalysed reaction is a ganglioside GQ1c (d18:1(4E)) + CMP-N-acetyl-beta-neuraminate = a ganglioside GP1c (d18:1(4E)) + CMP + H(+). It functions in the pathway protein modification; protein glycosylation. Functionally, involved in the synthesis of gangliosides GD1c, GT1a, GQ1b, GP1c and GT3 from GD1a, GT1b, GM1b and GD3 respectively. The protein is Alpha-2,8-sialyltransferase 8E of Homo sapiens (Human).